The primary structure comprises 439 residues: Tol-Pal system protein TolB (439 aa).

A signal peptide spans 1-22 (MKKPLRWLAALTVLLLPLSALA).

Belongs to the TolB family. As to quaternary structure, the Tol-Pal system is composed of five core proteins: the inner membrane proteins TolA, TolQ and TolR, the periplasmic protein TolB and the outer membrane protein Pal. They form a network linking the inner and outer membranes and the peptidoglycan layer.

The protein resides in the periplasm. Part of the Tol-Pal system, which plays a role in outer membrane invagination during cell division and is important for maintaining outer membrane integrity. The protein is Tol-Pal system protein TolB of Xanthomonas oryzae pv. oryzae (strain KACC10331 / KXO85).